Consider the following 262-residue polypeptide: MIDKSVFIHPTAIVEDGAVIGANAHIGPFCIVGPQVEIGEGTVLKSHVVVNGQTKIGRDNEIYQFASIGEVNQDLKYAGEPTRVEIGDRNRIRESVTIHRGTVQGGGLTKVGSDNLLMINAHVAHDCTVGNRCILANNATLAGHVSVDDFAIIGGMTAVHQFCIIGAHVMVGGCSGVAQDVPPYVIAQGNHATPFGVNIEGLKRRGFSREGLVAIRNAYKLLYRSGKTLDEAKLEIAELAEKHPEVKAFTEFFERSTRGPIR.

The protein belongs to the transferase hexapeptide repeat family. LpxA subfamily. Homotrimer.

The protein localises to the cytoplasm. It carries out the reaction a (3R)-hydroxyacyl-[ACP] + UDP-N-acetyl-alpha-D-glucosamine = a UDP-3-O-[(3R)-3-hydroxyacyl]-N-acetyl-alpha-D-glucosamine + holo-[ACP]. It functions in the pathway glycolipid biosynthesis; lipid IV(A) biosynthesis; lipid IV(A) from (3R)-3-hydroxytetradecanoyl-[acyl-carrier-protein] and UDP-N-acetyl-alpha-D-glucosamine: step 1/6. Functionally, involved in the biosynthesis of lipid A, a phosphorylated glycolipid that anchors the lipopolysaccharide to the outer membrane of the cell. This chain is Acyl-[acyl-carrier-protein]--UDP-N-acetylglucosamine O-acyltransferase, found in Salmonella typhi.